Reading from the N-terminus, the 164-residue chain is Peptidyl-prolyl cis-trans isomerase A-like 4H (164 aa).

A PPIase cyclophilin-type domain is found at 7-163 (FFDITVDGKP…KKITIADCGQ (157 aa)). Residues Asn-71 and Asn-108 are each glycosylated (N-linked (GlcNAc...) asparagine).

The protein belongs to the cyclophilin-type PPIase family. PPIase A subfamily.

The protein localises to the cytoplasm. It catalyses the reaction [protein]-peptidylproline (omega=180) = [protein]-peptidylproline (omega=0). In terms of biological role, PPIases accelerate the folding of proteins. It catalyzes the cis-trans isomerization of proline imidic peptide bonds in oligopeptides. The polypeptide is Peptidyl-prolyl cis-trans isomerase A-like 4H (Homo sapiens (Human)).